The primary structure comprises 426 residues: UDP-N-acetylglucosamine 1-carboxyvinyltransferase (426 aa).

Position 23-24 (23-24) interacts with phosphoenolpyruvate; the sequence is KN. UDP-N-acetyl-alpha-D-glucosamine is bound at residue Arg-99. Catalysis depends on Asp-123, which acts as the Proton donor. Asp-311 and Ile-333 together coordinate UDP-N-acetyl-alpha-D-glucosamine.

It belongs to the EPSP synthase family. MurA subfamily.

The protein resides in the cytoplasm. It carries out the reaction phosphoenolpyruvate + UDP-N-acetyl-alpha-D-glucosamine = UDP-N-acetyl-3-O-(1-carboxyvinyl)-alpha-D-glucosamine + phosphate. The protein operates within cell wall biogenesis; peptidoglycan biosynthesis. In terms of biological role, cell wall formation. Adds enolpyruvyl to UDP-N-acetylglucosamine. The chain is UDP-N-acetylglucosamine 1-carboxyvinyltransferase from Nocardia farcinica (strain IFM 10152).